The primary structure comprises 754 residues: Pentatricopeptide repeat-containing protein At3g53700, chloroplastic (754 aa).

A chloroplast-targeting transit peptide spans Met-1–Leu-72. PPR repeat units lie at residues Glu-82–Met-116, Gly-117–Pro-152, Asp-153–Pro-187, Asp-188–Pro-222, Asp-223–Trp-257, Ser-258–Gln-288, Asp-294–Pro-328, Asp-329–Pro-363, Asn-364–Pro-398, Asp-399–Pro-433, Asp-434–Arg-468, Ser-469–Arg-503, Asn-504–Pro-538, Asp-539–Pro-573, Asp-574–Leu-608, Thr-609–Pro-643, and Asp-645–Pro-680.

Belongs to the PPR family. P subfamily.

Its subcellular location is the plastid. The protein localises to the chloroplast. May be involved in female gametophyte development. The polypeptide is Pentatricopeptide repeat-containing protein At3g53700, chloroplastic (MEE40) (Arabidopsis thaliana (Mouse-ear cress)).